The following is a 650-amino-acid chain: Acetyl-coenzyme A synthetase (650 aa).

CoA-binding positions include 191-194 (RGGR), threonine 311, and asparagine 335. ATP is bound by residues 387-389 (GEP), 411-416 (DTWWQT), aspartate 500, and arginine 515. Position 523 (serine 523) interacts with CoA. Arginine 526 lines the ATP pocket. Residues valine 537, histidine 539, and valine 542 each contribute to the Mg(2+) site. A CoA-binding site is contributed by arginine 584. Position 609 is an N6-acetyllysine (lysine 609).

Belongs to the ATP-dependent AMP-binding enzyme family. The cofactor is Mg(2+). Post-translationally, acetylated. Deacetylation by the SIR2-homolog deacetylase activates the enzyme.

It catalyses the reaction acetate + ATP + CoA = acetyl-CoA + AMP + diphosphate. In terms of biological role, catalyzes the conversion of acetate into acetyl-CoA (AcCoA), an essential intermediate at the junction of anabolic and catabolic pathways. AcsA undergoes a two-step reaction. In the first half reaction, AcsA combines acetate with ATP to form acetyl-adenylate (AcAMP) intermediate. In the second half reaction, it can then transfer the acetyl group from AcAMP to the sulfhydryl group of CoA, forming the product AcCoA. The polypeptide is Acetyl-coenzyme A synthetase (Shewanella amazonensis (strain ATCC BAA-1098 / SB2B)).